A 339-amino-acid polypeptide reads, in one-letter code: Phenylalanine--tRNA ligase alpha subunit (339 aa).

Residue Glu253 participates in Mg(2+) binding.

It belongs to the class-II aminoacyl-tRNA synthetase family. Phe-tRNA synthetase alpha subunit type 1 subfamily. In terms of assembly, tetramer of two alpha and two beta subunits. The cofactor is Mg(2+).

Its subcellular location is the cytoplasm. The catalysed reaction is tRNA(Phe) + L-phenylalanine + ATP = L-phenylalanyl-tRNA(Phe) + AMP + diphosphate + H(+). This is Phenylalanine--tRNA ligase alpha subunit from Thioalkalivibrio sulfidiphilus (strain HL-EbGR7).